We begin with the raw amino-acid sequence, 37 residues long: GIFSLIKGAAQLIGKTVAKEAGKTGLELMACKVTKQC.

Residues Cys31 and Cys37 are joined by a disulfide bond.

Expressed by the skin glands.

The protein resides in the secreted. In terms of biological role, has antibacterial activity against the Gram-positive bacterium S.aureus ATCC 25923 (MIC=32 uM) and the Gram-negative bacterium E.coli ATCC 25726 (MIC=16 uM). The protein is Esculentin-2HSa of Odorrana hosii (Hose's rock frog).